A 175-amino-acid polypeptide reads, in one-letter code: ATP-dependent protease subunit HslV (175 aa).

Thr-5 is a catalytic residue. The Na(+) site is built by Gly-160, Asp-163, and Thr-166.

This sequence belongs to the peptidase T1B family. HslV subfamily. In terms of assembly, a double ring-shaped homohexamer of HslV is capped on each side by a ring-shaped HslU homohexamer. The assembly of the HslU/HslV complex is dependent on binding of ATP.

Its subcellular location is the cytoplasm. The catalysed reaction is ATP-dependent cleavage of peptide bonds with broad specificity.. Its activity is regulated as follows. Allosterically activated by HslU binding. Protease subunit of a proteasome-like degradation complex believed to be a general protein degrading machinery. The sequence is that of ATP-dependent protease subunit HslV from Myxococcus xanthus.